Reading from the N-terminus, the 366-residue chain is tRNA/tmRNA (uracil-C(5))-methyltransferase (366 aa).

Glutamine 190, tyrosine 218, asparagine 223, glutamate 239, and aspartate 299 together coordinate S-adenosyl-L-methionine. The active-site Nucleophile is the cysteine 324. Catalysis depends on glutamate 358, which acts as the Proton acceptor.

The protein belongs to the class I-like SAM-binding methyltransferase superfamily. RNA M5U methyltransferase family. TrmA subfamily.

The enzyme catalyses uridine(54) in tRNA + S-adenosyl-L-methionine = 5-methyluridine(54) in tRNA + S-adenosyl-L-homocysteine + H(+). It carries out the reaction uridine(341) in tmRNA + S-adenosyl-L-methionine = 5-methyluridine(341) in tmRNA + S-adenosyl-L-homocysteine + H(+). Functionally, dual-specificity methyltransferase that catalyzes the formation of 5-methyluridine at position 54 (m5U54) in all tRNAs, and that of position 341 (m5U341) in tmRNA (transfer-mRNA). The sequence is that of tRNA/tmRNA (uracil-C(5))-methyltransferase from Escherichia coli O157:H7 (strain EC4115 / EHEC).